Here is a 123-residue protein sequence, read N- to C-terminus: Small ribosomal subunit protein uS12cz/uS12cy (123 aa).

It belongs to the universal ribosomal protein uS12 family. As to quaternary structure, part of the 30S ribosomal subunit.

It localises to the plastid. Its subcellular location is the chloroplast. Functionally, with S4 and S5 plays an important role in translational accuracy. Located at the interface of the 30S and 50S subunits. In Daucus carota (Wild carrot), this protein is Small ribosomal subunit protein uS12cz/uS12cy (rps12-A).